Consider the following 465-residue polypeptide: uncharacterized protein (465 aa).

The region spanning 13 to 71 (GPRPGLRLELQAIDLDRDGHGLARWQGWVVVVPGLLPGERAKVQLQQRQKSRWLSRISE) is the TRAM domain. Residues C84, C90, C93, and C171 each coordinate [4Fe-4S] cluster. Positions 294, 324, 345, and 391 each coordinate S-adenosyl-L-methionine. Residue C418 is the Nucleophile of the active site.

This sequence belongs to the class I-like SAM-binding methyltransferase superfamily. RNA M5U methyltransferase family.

This is an uncharacterized protein from Parasynechococcus marenigrum (strain WH8102).